We begin with the raw amino-acid sequence, 689 residues long: Glycine--tRNA ligase beta subunit (689 aa).

It belongs to the class-II aminoacyl-tRNA synthetase family. As to quaternary structure, tetramer of two alpha and two beta subunits.

It is found in the cytoplasm. The catalysed reaction is tRNA(Gly) + glycine + ATP = glycyl-tRNA(Gly) + AMP + diphosphate. In Shewanella halifaxensis (strain HAW-EB4), this protein is Glycine--tRNA ligase beta subunit.